The primary structure comprises 159 residues: Galactose-specific lectin nattectin (159 aa).

Residues 1–21 form the signal peptide; sequence MASVPHFTVFLFLACALGIGA. Residues 22–24 constitute a propeptide that is removed on maturation; that stretch reads NVT. Cystine bridges form between Cys-31/Cys-42, Cys-59/Cys-155, and Cys-132/Cys-147. The C-type lectin domain maps to 38 to 156; that stretch reads HGSRCFTFHR…CKVKRSFLCA (119 aa). Ca(2+)-binding residues include Gln-122, Asp-124, Glu-130, and Asn-143. A Galactose-binding motif is present at residues 122–124; it reads QPD.

As to quaternary structure, monomer. Post-translationally, not glycosylated. Expressed by the venom gland.

It localises to the secreted. In terms of biological role, galactose specific lectin that exhibits hemagglutination activity (minimum hemagluttination concentration = 2.5 ug/well) in a calcium-independent fashion. Has remarkable pro-inflammatory activity, inducing neutrophil mobilization in mice. Plays a crucial role in the innate immune system and chronic manifestations, especially in neutrophil mobilization. The polypeptide is Galactose-specific lectin nattectin (Thalassophryne nattereri (Copper Joe toadfish)).